Here is a 547-residue protein sequence, read N- to C-terminus: Chaperonin GroEL (547 aa).

ATP contacts are provided by residues 30 to 33 (TLGP), lysine 51, 87 to 91 (DGTTT), glycine 415, 479 to 481 (NAA), and aspartate 495.

It belongs to the chaperonin (HSP60) family. As to quaternary structure, forms a cylinder of 14 subunits composed of two heptameric rings stacked back-to-back. Interacts with the co-chaperonin GroES.

The protein localises to the cytoplasm. It carries out the reaction ATP + H2O + a folded polypeptide = ADP + phosphate + an unfolded polypeptide.. Functionally, together with its co-chaperonin GroES, plays an essential role in assisting protein folding. The GroEL-GroES system forms a nano-cage that allows encapsulation of the non-native substrate proteins and provides a physical environment optimized to promote and accelerate protein folding. This is Chaperonin GroEL from Bordetella pertussis (strain Tohama I / ATCC BAA-589 / NCTC 13251).